Consider the following 94-residue polypeptide: Pyrimidine/purine nucleoside phosphorylase (94 aa).

This sequence belongs to the nucleoside phosphorylase PpnP family.

It carries out the reaction a purine D-ribonucleoside + phosphate = a purine nucleobase + alpha-D-ribose 1-phosphate. The enzyme catalyses adenosine + phosphate = alpha-D-ribose 1-phosphate + adenine. The catalysed reaction is cytidine + phosphate = cytosine + alpha-D-ribose 1-phosphate. It catalyses the reaction guanosine + phosphate = alpha-D-ribose 1-phosphate + guanine. It carries out the reaction inosine + phosphate = alpha-D-ribose 1-phosphate + hypoxanthine. The enzyme catalyses thymidine + phosphate = 2-deoxy-alpha-D-ribose 1-phosphate + thymine. The catalysed reaction is uridine + phosphate = alpha-D-ribose 1-phosphate + uracil. It catalyses the reaction xanthosine + phosphate = alpha-D-ribose 1-phosphate + xanthine. Functionally, catalyzes the phosphorolysis of diverse nucleosides, yielding D-ribose 1-phosphate and the respective free bases. Can use uridine, adenosine, guanosine, cytidine, thymidine, inosine and xanthosine as substrates. Also catalyzes the reverse reactions. In Salmonella agona (strain SL483), this protein is Pyrimidine/purine nucleoside phosphorylase.